We begin with the raw amino-acid sequence, 314 residues long: Olfactory receptor 5P51 (314 aa).

Over 1–28 (MAFLEDGNHTAVTEFVLFGLTDDPVLRV) the chain is Extracellular. Residue N8 is glycosylated (N-linked (GlcNAc...) asparagine). The chain crosses the membrane as a helical span at residues 29–49 (ILFIIFLCIYLVNVSGNLSTI). At 50 to 57 (LLIRVSSQ) the chain is on the cytoplasmic side. Residues 58–78 (LHHPMYFFLSHLASVDVGYSS) form a helical membrane-spanning segment. Residues 79-102 (TVTPKMLANFLLERSTISYLGCTI) are Extracellular-facing. An intrachain disulfide couples C100 to C192. The helical transmembrane segment at 103–123 (QLFSGAFVGTLECFLLATMAY) threads the bilayer. Topologically, residues 124 to 136 (DRFIAICNPLLYS) are cytoplasmic. The helical transmembrane segment at 137-157 (TKMSTQVCIQLLVGSYIGGFL) threads the bilayer. The Extracellular portion of the chain corresponds to 158–199 (NASSFLLSFFPLLFCGPNRVNHYSCDLTPLIELSCSGSNVPI). Residues 200-220 (VPASFCSAFVIIVTVSVIAIS) form a helical membrane-spanning segment. The Cytoplasmic segment spans residues 221-240 (YTYILITILKMRSTEGRQKA). The helical transmembrane segment at 241-261 (FSTCTSHLTAVTLYYGTVTFI) threads the bilayer. Topologically, residues 262–274 (YVMPKSSYSTDQN) are extracellular. Residues 275 to 295 (KVVSVFYTVVIPMLNPIIYSL) traverse the membrane as a helical segment. Residues 296-314 (RNNEIKGALKRQLARKIFS) lie on the Cytoplasmic side of the membrane.

Belongs to the G-protein coupled receptor 1 family.

Its subcellular location is the cell membrane. Its function is as follows. Potential odorant receptor. The chain is Olfactory receptor 5P51 from Mus musculus (Mouse).